A 272-amino-acid chain; its full sequence is HMP-PP phosphatase (272 aa).

Asp8 acts as the Nucleophile in catalysis. Mg(2+) contacts are provided by Asp8, Asp10, and Asp212.

Belongs to the HAD-like hydrolase superfamily. Cof family. Requires Mg(2+) as cofactor.

It catalyses the reaction 4-amino-2-methyl-5-(diphosphooxymethyl)pyrimidine + H2O = 4-amino-2-methyl-5-(phosphooxymethyl)pyrimidine + phosphate + H(+). Functionally, catalyzes the hydrolysis of 4-amino-2-methyl-5-hydroxymethylpyrimidine pyrophosphate (HMP-PP) to 4-amino-2-methyl-5-hydroxymethylpyrimidine phosphate (HMP-P). This chain is HMP-PP phosphatase, found in Salmonella enteritidis PT4 (strain P125109).